The primary structure comprises 127 residues: uncharacterized protein (127 aa).

This is an uncharacterized protein from Thermoproteus tenax (TTV1).